Reading from the N-terminus, the 241-residue chain is MTEGEGRIQLEPSWKARVGEWLLQPQMQELSAFLRQRKAANARVFPPGPQIFAAFDATPFEQVKVVVLGQDPYHGEGQAHGLCFSVLPGVPVPPSLLNIYKEIQDDLGIPRPDHGYLMPWARQGVLLLNAVLTVEQGRAGAHQNKGWEGFTDHVVETLNREREGLVFLLWGSYAQSKGKVIDQARHRVFKAPHPSPLSAHRGFLGCKHFSKTNEHLQRRGLSPIDWSLPSRAALDLSLAGG.

Aspartate 71 acts as the Proton acceptor in catalysis.

The protein belongs to the uracil-DNA glycosylase (UDG) superfamily. UNG family.

It is found in the cytoplasm. It catalyses the reaction Hydrolyzes single-stranded DNA or mismatched double-stranded DNA and polynucleotides, releasing free uracil.. Functionally, excises uracil residues from the DNA which can arise as a result of misincorporation of dUMP residues by DNA polymerase or due to deamination of cytosine. In Xanthomonas campestris pv. campestris (strain 8004), this protein is Uracil-DNA glycosylase.